A 95-amino-acid chain; its full sequence is Protein TusB (95 aa).

This sequence belongs to the DsrH/TusB family. Heterohexamer, formed by a dimer of trimers. The hexameric TusBCD complex contains 2 copies each of TusB, TusC and TusD. The TusBCD complex interacts with TusE.

The protein resides in the cytoplasm. Part of a sulfur-relay system required for 2-thiolation of 5-methylaminomethyl-2-thiouridine (mnm(5)s(2)U) at tRNA wobble positions. In Shigella dysenteriae serotype 1 (strain Sd197), this protein is Protein TusB.